We begin with the raw amino-acid sequence, 233 residues long: tRNA (guanine-N(7)-)-methyltransferase (233 aa).

Residues Met-1–Val-23 form a disordered region. 4 residues coordinate S-adenosyl-L-methionine: Glu-64, Glu-89, Asp-116, and Asp-138. Residue Asp-138 is part of the active site. Substrate-binding positions include Lys-142, Asp-174, and Thr-212–Glu-215.

This sequence belongs to the class I-like SAM-binding methyltransferase superfamily. TrmB family.

It carries out the reaction guanosine(46) in tRNA + S-adenosyl-L-methionine = N(7)-methylguanosine(46) in tRNA + S-adenosyl-L-homocysteine. It participates in tRNA modification; N(7)-methylguanine-tRNA biosynthesis. Catalyzes the formation of N(7)-methylguanine at position 46 (m7G46) in tRNA. The polypeptide is tRNA (guanine-N(7)-)-methyltransferase (Mesorhizobium japonicum (strain LMG 29417 / CECT 9101 / MAFF 303099) (Mesorhizobium loti (strain MAFF 303099))).